Consider the following 145-residue polypeptide: Mitochondrial import receptor subunit TOM20 homolog (145 aa).

Topologically, residues 1-6 are mitochondrial intermembrane; the sequence is MVGRNS. Residues 7 to 24 form a helical membrane-spanning segment; that stretch reads AIAAGVCGALFIGYCIYF. The Cytoplasmic portion of the chain corresponds to 25-145; the sequence is DRKRRSDPNF…AQSLAEDDVE (121 aa). Residues Lys35, Lys56, Lys61, and Lys68 each participate in a glycyl lysine isopeptide (Lys-Gly) (interchain with G-Cter in ubiquitin) cross-link. A phosphoserine mark is found at Ser135 and Ser138.

This sequence belongs to the Tom20 family. In terms of assembly, forms part of the preprotein translocase complex of the outer mitochondrial membrane (TOM complex) which consists of at least 7 different proteins (TOMM5, TOMM6, TOMM7, TOMM20, TOMM22, TOMM40 and TOMM70). Interacts with TOM22. Interacts with APEX1. Interacts with TBC1D21. Upon mitochondrial depolarization, interacts with PINK1; the interaction is required for PINK1-TOM-TIM23 supercomplex formation which is critical for PINK1 stabilization at the outer mitochondrial membrane, kinase activation and downstream mitophagy. Post-translationally, ubiquitinated by PRKN during mitophagy, leading to its degradation and enhancement of mitophagy. Deubiquitinated by USP30.

It localises to the mitochondrion outer membrane. Functionally, central component of the receptor complex responsible for the recognition and translocation of cytosolically synthesized mitochondrial preproteins. Together with TOM22 functions as the transit peptide receptor at the surface of the mitochondrion outer membrane and facilitates the movement of preproteins into the TOM40 translocation pore. Required for the translocation across the mitochondrial outer membrane of cytochrome P450 monooxygenases. This Bos taurus (Bovine) protein is Mitochondrial import receptor subunit TOM20 homolog (TOMM20).